We begin with the raw amino-acid sequence, 334 residues long: uncharacterized protein (334 aa).

It belongs to the ADP-ribosylglycohydrolase family.

This is an uncharacterized protein from Escherichia coli (strain K12).